The chain runs to 114 residues: uncharacterized protein (114 aa).

One can recognise an HIT domain in the interval 6-114; that stretch reads IFKNIIQRKI…LGGKKLKSFS (109 aa).

This is an uncharacterized protein from Buchnera aphidicola subsp. Acyrthosiphon pisum (strain APS) (Acyrthosiphon pisum symbiotic bacterium).